A 407-amino-acid polypeptide reads, in one-letter code: L-amino-acid oxidase (407 aa).

Cysteines 10 and 94 form a disulfide. The N-linked (GlcNAc...) asparagine glycan is linked to asparagine 93. Residue histidine 144 coordinates substrate. FAD is bound at residue valine 182. Cysteine 252 and cysteine 333 are disulfide-bonded. Asparagine 282 carries an N-linked (GlcNAc...) asparagine glycan. Tyrosine 293 is a binding site for substrate. Residues glutamate 378 and 385–390 contribute to the FAD site; that span reads GWIDST. 385 to 386 provides a ligand contact to substrate; sequence GW.

This sequence belongs to the flavin monoamine oxidase family. FIG1 subfamily. As to quaternary structure, homodimer; non-covalently linked. FAD is required as a cofactor. In terms of tissue distribution, expressed by the venom gland.

It is found in the secreted. The catalysed reaction is an L-alpha-amino acid + O2 + H2O = a 2-oxocarboxylate + H2O2 + NH4(+). The enzyme catalyses L-leucine + O2 + H2O = 4-methyl-2-oxopentanoate + H2O2 + NH4(+). It carries out the reaction L-phenylalanine + O2 + H2O = 3-phenylpyruvate + H2O2 + NH4(+). It catalyses the reaction L-isoleucine + O2 + H2O = (S)-3-methyl-2-oxopentanoate + H2O2 + NH4(+). The catalysed reaction is L-aspartate + O2 + H2O = oxaloacetate + H2O2 + NH4(+). The enzyme catalyses L-lysine + O2 + H2O = 6-amino-2-oxohexanoate + H2O2 + NH4(+). It carries out the reaction L-glutamate + O2 + H2O = H2O2 + 2-oxoglutarate + NH4(+). In terms of biological role, catalyzes an oxidative deamination of predominantly hydrophobic and aromatic L-amino acids, thus producing hydrogen peroxide that may contribute to the diverse toxic effects of this enzyme. Is highly active on L-Leu followed by L-Phe and L-Ile, moderately active on L-Asp, L-Glu, and L-Lys, and not active on L-Pro, L-Asn, L-Gly, L-Ser and L-Cys. Exhibits diverse biological activities such as antibacterial activity (Minimal inhibitory concentrations (MIC) are 9.0 ug/ml against S.aureus, 144.0 ug/ml against P.aeruginosa and 288.0 ug/ml against E.coli) and inhibition of ADP- and TMVA-induced platelet aggregation. Effects of snake L-amino oxidases on platelets are controversial, since they either induce aggregation or inhibit agonist-induced aggregation. These different effects are probably due to different experimental conditions. Unlike other snake venom L-amino acid oxidases, does not induce hemorrhage. This protein may also induce hemolysis, edema, apoptosis and have antiparasitic activities. This is L-amino-acid oxidase from Daboia siamensis (Eastern Russel's viper).